The following is a 57-amino-acid chain: Granulin-1 (57 aa).

Disulfide bonds link Cys4–Cys16 and Cys10–Cys26.

This sequence belongs to the granulin family. Granulins are disulfide bridged. Ubiquitous.

The protein resides in the secreted. Its function is as follows. Granulins have possible cytokine-like activity. They may play a role in inflammation, wound repair, and tissue remodeling. This is Granulin-1 from Cyprinus carpio (Common carp).